Consider the following 285-residue polypeptide: Phosphatidylglycerol--prolipoprotein diacylglyceryl transferase (285 aa).

5 helical membrane-spanning segments follow: residues 17–37 (ALGL…GLTL), 43–63 (WYAL…LFLL), 78–98 (LVFW…VLFY), 113–133 (WEGG…IWWV), and 139–159 (LSWL…LFLG). Arg160 provides a ligand contact to a 1,2-diacyl-sn-glycero-3-phospho-(1'-sn-glycerol). A run of 3 helical transmembrane segments spans residues 195–215 (LYEA…QFFA), 223–243 (GKLA…VEWF), and 256–276 (GLTM…WLII).

The protein belongs to the Lgt family.

It is found in the cell inner membrane. It catalyses the reaction L-cysteinyl-[prolipoprotein] + a 1,2-diacyl-sn-glycero-3-phospho-(1'-sn-glycerol) = an S-1,2-diacyl-sn-glyceryl-L-cysteinyl-[prolipoprotein] + sn-glycerol 1-phosphate + H(+). The protein operates within protein modification; lipoprotein biosynthesis (diacylglyceryl transfer). In terms of biological role, catalyzes the transfer of the diacylglyceryl group from phosphatidylglycerol to the sulfhydryl group of the N-terminal cysteine of a prolipoprotein, the first step in the formation of mature lipoproteins. The polypeptide is Phosphatidylglycerol--prolipoprotein diacylglyceryl transferase (Zymomonas mobilis subsp. mobilis (strain ATCC 31821 / ZM4 / CP4)).